The primary structure comprises 208 residues: Probable Brix domain-containing ribosomal biogenesis protein (208 aa).

A Brix domain is found at 1–196 (MMLITTSHRP…IWIMEDGRRW (196 aa)).

In terms of biological role, probably involved in the biogenesis of the ribosome. This is Probable Brix domain-containing ribosomal biogenesis protein from Thermococcus kodakarensis (strain ATCC BAA-918 / JCM 12380 / KOD1) (Pyrococcus kodakaraensis (strain KOD1)).